Here is a 632-residue protein sequence, read N- to C-terminus: Chaperone protein HtpG (632 aa).

The a; substrate-binding stretch occupies residues 1 to 339 (MTQQTMSFQA…SSDLPLNVSR (339 aa)). A b region spans residues 340 to 559 (EILQESRDVK…DNDMSGYLQR (220 aa)). The c stretch occupies residues 560 to 632 (MLKAAGQNAP…TNALLLSRAA (73 aa)).

It belongs to the heat shock protein 90 family. Homodimer.

Its subcellular location is the cytoplasm. Functionally, molecular chaperone. Has ATPase activity. This is Chaperone protein HtpG from Burkholderia thailandensis (strain ATCC 700388 / DSM 13276 / CCUG 48851 / CIP 106301 / E264).